Consider the following 222-residue polypeptide: ATP-dependent dethiobiotin synthetase BioD (222 aa).

12-17 (DAGKTV) provides a ligand contact to ATP. Mg(2+) is bound at residue Thr-16. Lys-37 is a catalytic residue. Substrate is bound at residue Ser-41. ATP contacts are provided by residues Asp-54, 116–119 (EGAG), 176–177 (VQ), 206–208 (PYL), and Glu-213. Residues Asp-54 and Glu-116 each contribute to the Mg(2+) site.

This sequence belongs to the dethiobiotin synthetase family. In terms of assembly, homodimer. Mg(2+) serves as cofactor.

It localises to the cytoplasm. The catalysed reaction is (7R,8S)-7,8-diammoniononanoate + CO2 + ATP = (4R,5S)-dethiobiotin + ADP + phosphate + 3 H(+). It functions in the pathway cofactor biosynthesis; biotin biosynthesis; biotin from 7,8-diaminononanoate: step 1/2. Functionally, catalyzes a mechanistically unusual reaction, the ATP-dependent insertion of CO2 between the N7 and N8 nitrogen atoms of 7,8-diaminopelargonic acid (DAPA, also called 7,8-diammoniononanoate) to form a ureido ring. This is ATP-dependent dethiobiotin synthetase BioD from Idiomarina loihiensis (strain ATCC BAA-735 / DSM 15497 / L2-TR).